Reading from the N-terminus, the 475-residue chain is Doublecortin domain-containing protein 2 (475 aa).

2 consecutive Doublecortin domains span residues 17-100 (KSVL…LNYL) and 139-221 (CTIF…LPYS). The tract at residues 234–475 (YGQKASSLPP…EANKASSAVA (242 aa)) is disordered. Over residues 252-272 (GSGNYRQSKSTIGSSDNSSPQ) the composition is skewed to polar residues. Position 270 is a phosphoserine (Ser270). Residues 353–365 (EKTSKDANQKEDF) show a composition bias toward basic and acidic residues. Positions 407 to 425 (TDEENGEELDQVAEELQPT) are enriched in acidic residues.

Interacts with DVL1, DVL2 and DVL3. Expressed in hair cells of the inner ear.

The protein resides in the cell projection. It is found in the cilium. The protein localises to the cytoplasm. Its subcellular location is the cytoskeleton. It localises to the cilium axoneme. The protein resides in the kinocilium. In terms of biological role, protein that plays a role in the inhibition of canonical Wnt signaling pathway. May be involved in neuronal migration during development of the cerebral neocortex. Involved in the control of ciliogenesis and ciliary length. In Mus musculus (Mouse), this protein is Doublecortin domain-containing protein 2 (Dcdc2).